Consider the following 1070-residue polypeptide: DNA-directed RNA polymerase subunit beta (1070 aa).

It belongs to the RNA polymerase beta chain family. In plastids the minimal PEP RNA polymerase catalytic core is composed of four subunits: alpha, beta, beta', and beta''. When a (nuclear-encoded) sigma factor is associated with the core the holoenzyme is formed, which can initiate transcription.

It localises to the plastid. The protein localises to the chloroplast. It carries out the reaction RNA(n) + a ribonucleoside 5'-triphosphate = RNA(n+1) + diphosphate. DNA-dependent RNA polymerase catalyzes the transcription of DNA into RNA using the four ribonucleoside triphosphates as substrates. This Nicotiana tomentosiformis (Tobacco) protein is DNA-directed RNA polymerase subunit beta.